Here is a 618-residue protein sequence, read N- to C-terminus: Cationic amino acid transporter 3 (618 aa).

Over Met1–Asp36 the chain is Cytoplasmic. Residues Leu37–Val57 form a helical membrane-spanning segment. Topologically, residues Ala58 to Lys61 are extracellular. Residues Ala62–Leu82 form a helical membrane-spanning segment. Topologically, residues Cys83–Glu107 are cytoplasmic. Residues Leu108–Val128 traverse the membrane as a helical segment. At Ala129–Glu162 the chain is on the extracellular side. The chain crosses the membrane as a helical span at residues Tyr163–Ala183. The Cytoplasmic segment spans residues Ser184–Lys191. The helical transmembrane segment at Val192 to Gly212 threads the bilayer. At Glu213–Gly244 the chain is on the extracellular side. An N-linked (GlcNAc...) asparagine glycan is attached at Asn232. Residues Phe245–Val265 traverse the membrane as a helical segment. The Cytoplasmic portion of the chain corresponds to Gly266–Pro285. A helical transmembrane segment spans residues Met286–Leu306. Over Thr307 to Tyr335 the chain is Extracellular. A helical membrane pass occupies residues Leu336–Met356. Residues Pro357 to Thr380 are Cytoplasmic-facing. The chain crosses the membrane as a helical span at residues His381–Phe401. Residues Glu402–Leu406 are Extracellular-facing. Residues Val407–Ile427 form a helical membrane-spanning segment. Over Leu428–Arg474 the chain is Cytoplasmic. Residues Val475–Thr495 traverse the membrane as a helical segment. Residues Trp496–Pro506 are Extracellular-facing. The helical transmembrane segment at Val507–Trp527 threads the bilayer. Residues Arg528 to Lys539 are Cytoplasmic-facing. The helical transmembrane segment at Val540–Gln560 threads the bilayer. Residues Met561–Arg568 are Extracellular-facing. A helical transmembrane segment spans residues Phe569 to Met589. The Cytoplasmic segment spans residues Lys590 to Ile618. A Phosphothreonine modification is found at Thr605. Ser617 carries the post-translational modification Phosphoserine.

The protein belongs to the amino acid-polyamine-organocation (APC) superfamily. Cationic amino acid transporter (CAT) (TC 2.A.3.3) family. N-glycosylated. As to expression, expressed in adult brain and in a wide variety of embryonic tissues.

The protein resides in the cell membrane. It carries out the reaction L-arginine(in) = L-arginine(out). The enzyme catalyses L-lysine(in) = L-lysine(out). The catalysed reaction is L-ornithine(in) = L-ornithine(out). Functionally, uniporter that mediates the uptake of cationic L-amino acids such as L-arginine, L-lysine and L-ornithine. The transport is sodium ions- and pH-independent, moderately trans-stimulated and is mediated by passive diffusion. The polypeptide is Cationic amino acid transporter 3 (Mus musculus (Mouse)).